The primary structure comprises 293 residues: 4-hydroxy-tetrahydrodipicolinate synthase (293 aa).

Position 45 (Thr45) interacts with pyruvate. Tyr133 (proton donor/acceptor) is an active-site residue. Residue Lys161 is the Schiff-base intermediate with substrate of the active site. Position 203 (Ile203) interacts with pyruvate.

The protein belongs to the DapA family. As to quaternary structure, homotetramer; dimer of dimers.

It localises to the cytoplasm. The enzyme catalyses L-aspartate 4-semialdehyde + pyruvate = (2S,4S)-4-hydroxy-2,3,4,5-tetrahydrodipicolinate + H2O + H(+). The protein operates within amino-acid biosynthesis; L-lysine biosynthesis via DAP pathway; (S)-tetrahydrodipicolinate from L-aspartate: step 3/4. Catalyzes the condensation of (S)-aspartate-beta-semialdehyde [(S)-ASA] and pyruvate to 4-hydroxy-tetrahydrodipicolinate (HTPA). This Syntrophotalea carbinolica (strain DSM 2380 / NBRC 103641 / GraBd1) (Pelobacter carbinolicus) protein is 4-hydroxy-tetrahydrodipicolinate synthase.